Here is a 462-residue protein sequence, read N- to C-terminus: Argininosuccinate lyase (462 aa).

The protein belongs to the lyase 1 family. Argininosuccinate lyase subfamily.

It localises to the cytoplasm. It catalyses the reaction 2-(N(omega)-L-arginino)succinate = fumarate + L-arginine. It functions in the pathway amino-acid biosynthesis; L-arginine biosynthesis; L-arginine from L-ornithine and carbamoyl phosphate: step 3/3. This is Argininosuccinate lyase from Prochlorococcus marinus (strain MIT 9211).